We begin with the raw amino-acid sequence, 154 residues long: Large ribosomal subunit protein uL30 (154 aa).

Residues 122-141 are disordered; the sequence is RGGHDGIKTPASDGGQLGKH.

It belongs to the universal ribosomal protein uL30 family. Part of the 50S ribosomal subunit.

In Halobacterium salinarum (strain ATCC 29341 / DSM 671 / R1), this protein is Large ribosomal subunit protein uL30.